A 1291-amino-acid chain; its full sequence is Period circadian protein homolog 1 (1291 aa).

The interval 1-134 (MSGPLEGADG…SSEQSARART (134 aa)) is disordered. The tract at residues 1–151 (MSGPLEGADG…LRELKLRLPP (151 aa)) is interaction with BTRC. Low complexity predominate over residues 48–115 (NSNGSSGNES…AYSLLSASSE (68 aa)). The segment covering 116-132 (QDNPSTSGCSSEQSARA) has biased composition (polar residues). Thr121 is modified (phosphothreonine; by CSNK1E). Residues Ser122 and Ser126 each carry the phosphoserine; by CSNK1E modification. The short motif at 138 to 147 (LMTALRELKL) is the Nuclear export signal 1 element. PAS domains are found at residues 208 to 275 (ITSE…PSRL) and 348 to 414 (YEAP…KILQ). Residues 422–465 (HSPIRFCARNGEYVTMDTSWAGFVHPWSRKVAFVLGRHKVRTAP) enclose the PAC domain. The Nuclear export signal 2 signature appears at 489–498 (LSEQIHRLLL). 2 disordered regions span residues 508–544 (GLCG…PAPV) and 647–698 (TKRK…KEPV). Low complexity-rich tracts occupy residues 513 to 533 (GPLM…SNGG) and 652 to 662 (ASSSSYTASSA). The interval 596-815 (ELEVAPVPDQ…GLDTSSVAPS (220 aa)) is required for phosphorylation by CSNK1E. Phosphoserine occurs at positions 661, 663, and 704. Disordered stretches follow at residues 749–772 (GLAP…TPDA), 809–873 (TSSV…PPAT), and 938–1037 (SQAP…ALSG). Over residues 751–769 (APGPAPSPAPSPTVAPDPT) the composition is skewed to pro residues. Phosphoserine is present on Ser815. Positions 824-840 (IPPGRRHHCRSKAKRSR) match the Nuclear localization signal motif. The span at 827 to 846 (GRRHHCRSKAKRSRHHHHQT) shows a compositional bias: basic residues. 2 stretches are compositionally biased toward pro residues: residues 859-873 (SPVP…PPAT) and 955-965 (PSLPPPPLSPP). Positions 973–985 (FNSRCSSPLQLNL) are enriched in polar residues. A phosphoserine mark is found at Ser978 and Ser979. Positions 981–988 (LQLNLLQL) match the Nuclear export signal 3 motif. The LXXLL motif lies at 1042–1046 (LELLL). Over residues 1051–1061 (RSGTGSAASGS) the composition is skewed to low complexity. Disordered stretches follow at residues 1051–1099 (RSGT…YFGS) and 1207–1291 (SVQD…NSTS). Residues 1062-1076 (LGSGLGSGSGSGSHE) show a composition bias toward gly residues. Positions 1077 to 1094 (GGSTSASITRSSQSSHTS) are enriched in low complexity. The tract at residues 1148–1291 (SRDAASVLKQ…ALPAEENSTS (144 aa)) is CRY binding domain. Over residues 1235–1248 (GEGGGCGVGGGGGD) the composition is skewed to gly residues. A compositionally biased stretch (polar residues) spans 1253-1267 (AQTQIGAKGSSSQDS).

In terms of assembly, homodimer. Component of the circadian core oscillator, which includes the CRY proteins, CLOCK or NPAS2, BMAL1 or BMAL2, CSNK1D and/or CSNK1E, TIMELESS, and the PER proteins. Interacts directly with TIMELESS. Interacts directly with PER2, PER3, CRY1 and CRY2. Interacts with BMAL1 and CLOCK. Interacts with GPRASP1. Interacts (phosphorylated) with BTRC and FBXW11; the interactions trigger proteasomal degradation. Interacts with NONO and SFPQ. Interacts with WDR5. Interacts with U2AF1L4 (Isoform 3). Interacts with USP2. Interacts with HNF4A. Phosphorylated on serine residues by CSNK1D, CSNK1E and probably also by CSNK1G2. Phosphorylation by CSNK1D or CSNK1E promotes nuclear location of PER proteins as well as ubiquitination and subsequent degradation. May be dephosphorylated by PP1. In terms of processing, ubiquitinated; requires phosphorylation by CSNK1E and interaction with BTRC and FBXW11. Deubiquitinated by USP2. In brain, highest expression is observed in the SCN. Highly expressed in the pyramidal cell layer of the piriform cortex, the periventricular part of the caudate-putamen, many thalamic nuclei, and the granular layer of the cerebellar cortex. Weaker expression is detected in most area of the brain, including cortical and non cortical structures. Expression but no oscillations occurs in the glomerular and mitral cell layers of the olfactory bulb, the internal granular layer of the cerebellum, the cornu ammonis and dentate gyrus of the hippocampus, the cerebral and piriform cortices. Expressed in the renal cortex (at protein level). Also found in heart, brain, bladder, lumbar spinal cord, spleen, lung, liver, skeletal muscle and testis.

The protein resides in the nucleus. The protein localises to the cytoplasm. In terms of biological role, transcriptional repressor which forms a core component of the circadian clock. The circadian clock, an internal time-keeping system, regulates various physiological processes through the generation of approximately 24 hour circadian rhythms in gene expression, which are translated into rhythms in metabolism and behavior. It is derived from the Latin roots 'circa' (about) and 'diem' (day) and acts as an important regulator of a wide array of physiological functions including metabolism, sleep, body temperature, blood pressure, endocrine, immune, cardiovascular, and renal function. Consists of two major components: the central clock, residing in the suprachiasmatic nucleus (SCN) of the brain, and the peripheral clocks that are present in nearly every tissue and organ system. Both the central and peripheral clocks can be reset by environmental cues, also known as Zeitgebers (German for 'timegivers'). The predominant Zeitgeber for the central clock is light, which is sensed by retina and signals directly to the SCN. The central clock entrains the peripheral clocks through neuronal and hormonal signals, body temperature and feeding-related cues, aligning all clocks with the external light/dark cycle. Circadian rhythms allow an organism to achieve temporal homeostasis with its environment at the molecular level by regulating gene expression to create a peak of protein expression once every 24 hours to control when a particular physiological process is most active with respect to the solar day. Transcription and translation of core clock components (CLOCK, NPAS2, BMAL1, BMAL2, PER1, PER2, PER3, CRY1 and CRY2) plays a critical role in rhythm generation, whereas delays imposed by post-translational modifications (PTMs) are important for determining the period (tau) of the rhythms (tau refers to the period of a rhythm and is the length, in time, of one complete cycle). A diurnal rhythm is synchronized with the day/night cycle, while the ultradian and infradian rhythms have a period shorter and longer than 24 hours, respectively. Disruptions in the circadian rhythms contribute to the pathology of cardiovascular diseases, cancer, metabolic syndromes and aging. A transcription/translation feedback loop (TTFL) forms the core of the molecular circadian clock mechanism. Transcription factors, CLOCK or NPAS2 and BMAL1 or BMAL2, form the positive limb of the feedback loop, act in the form of a heterodimer and activate the transcription of core clock genes and clock-controlled genes (involved in key metabolic processes), harboring E-box elements (5'-CACGTG-3') within their promoters. The core clock genes: PER1/2/3 and CRY1/2 which are transcriptional repressors form the negative limb of the feedback loop and interact with the CLOCK|NPAS2-BMAL1|BMAL2 heterodimer inhibiting its activity and thereby negatively regulating their own expression. This heterodimer also activates nuclear receptors NR1D1/2 and RORA/B/G, which form a second feedback loop and which activate and repress BMAL1 transcription, respectively. Regulates circadian target genes expression at post-transcriptional levels, but may not be required for the repression at transcriptional level. Controls PER2 protein decay. Represses CRY2 preventing its repression on CLOCK/BMAL1 target genes such as FXYD5 and SCNN1A in kidney and PPARA in liver. Besides its involvement in the maintenance of the circadian clock, has an important function in the regulation of several processes. Participates in the repression of glucocorticoid receptor NR3C1/GR-induced transcriptional activity by reducing the association of NR3C1/GR to glucocorticoid response elements (GREs) by BMAL1:CLOCK. Plays a role in the modulation of the neuroinflammatory state via the regulation of inflammatory mediators release, such as CCL2 and IL6. In spinal astrocytes, negatively regulates the MAPK14/p38 and MAPK8/JNK MAPK cascades as well as the subsequent activation of NFkappaB. Coordinately regulates the expression of multiple genes that are involved in the regulation of renal sodium reabsorption. Can act as gene expression activator in a gene and tissue specific manner, in kidney enhances WNK1 and SLC12A3 expression in collaboration with CLOCK. Modulates hair follicle cycling. Represses the CLOCK-BMAL1 induced transcription of BHLHE40/DEC1. This is Period circadian protein homolog 1 (Per1) from Mus musculus (Mouse).